The following is a 234-amino-acid chain: Large ribosomal subunit protein bL25 (234 aa).

The segment at 1–24 is disordered; the sequence is MATVMELKATARPKSGKGAARAER.

Belongs to the bacterial ribosomal protein bL25 family. CTC subfamily. As to quaternary structure, part of the 50S ribosomal subunit; part of the 5S rRNA/L5/L18/L25 subcomplex. Contacts the 5S rRNA. Binds to the 5S rRNA independently of L5 and L18.

Functionally, this is one of the proteins that binds to the 5S RNA in the ribosome where it forms part of the central protuberance. The protein is Large ribosomal subunit protein bL25 of Rhodopseudomonas palustris (strain BisB5).